The following is a 324-amino-acid chain: NADH-ubiquinone oxidoreductase chain 1 (324 aa).

Helical transmembrane passes span leucine 9–isoleucine 29, phenylalanine 75–methionine 95, leucine 106–glycine 126, isoleucine 146–tyrosine 166, serine 177–alanine 197, leucine 228–phenylalanine 248, glutamate 259–valine 279, and phenylalanine 299–glycine 319.

Belongs to the complex I subunit 1 family.

The protein resides in the mitochondrion inner membrane. The catalysed reaction is a ubiquinone + NADH + 5 H(+)(in) = a ubiquinol + NAD(+) + 4 H(+)(out). In terms of biological role, core subunit of the mitochondrial membrane respiratory chain NADH dehydrogenase (Complex I) that is believed to belong to the minimal assembly required for catalysis. Complex I functions in the transfer of electrons from NADH to the respiratory chain. The immediate electron acceptor for the enzyme is believed to be ubiquinone. In Carassius auratus (Goldfish), this protein is NADH-ubiquinone oxidoreductase chain 1 (MT-ND1).